The primary structure comprises 752 residues: Zinc finger protein 184 (752 aa).

Positions valine 28 to glycine 99 constitute a KRAB domain. A phosphoserine mark is found at serine 117, serine 122, and serine 200. Lysine 207 participates in a covalent cross-link: Glycyl lysine isopeptide (Lys-Gly) (interchain with G-Cter in SUMO2). 19 consecutive C2H2-type zinc fingers follow at residues cysteine 223 to histidine 245, tyrosine 251 to histidine 273, tyrosine 279 to histidine 301, tyrosine 307 to histidine 329, tyrosine 335 to histidine 357, phenylalanine 363 to histidine 385, tyrosine 391 to histidine 413, tyrosine 419 to histidine 441, tyrosine 447 to histidine 469, tyrosine 475 to histidine 497, phenylalanine 503 to histidine 525, tyrosine 531 to histidine 553, tyrosine 559 to histidine 581, tyrosine 587 to histidine 609, tyrosine 615 to histidine 637, tyrosine 643 to histidine 665, tyrosine 671 to histidine 693, tyrosine 699 to histidine 721, and phenylalanine 727 to histidine 749.

Belongs to the krueppel C2H2-type zinc-finger protein family.

It localises to the nucleus. Functionally, may be involved in transcriptional regulation. The protein is Zinc finger protein 184 (ZNF184) of Bos taurus (Bovine).